A 264-amino-acid polypeptide reads, in one-letter code: 3-methyl-2-oxobutanoate hydroxymethyltransferase (264 aa).

The Mg(2+) site is built by D45 and D84. 3-methyl-2-oxobutanoate-binding positions include 45–46 (DS), D84, and K112. E114 is a binding site for Mg(2+). E181 acts as the Proton acceptor in catalysis.

It belongs to the PanB family. Homodecamer; pentamer of dimers. Mg(2+) serves as cofactor.

The protein resides in the cytoplasm. The enzyme catalyses 3-methyl-2-oxobutanoate + (6R)-5,10-methylene-5,6,7,8-tetrahydrofolate + H2O = 2-dehydropantoate + (6S)-5,6,7,8-tetrahydrofolate. The protein operates within cofactor biosynthesis; (R)-pantothenate biosynthesis; (R)-pantoate from 3-methyl-2-oxobutanoate: step 1/2. Its function is as follows. Catalyzes the reversible reaction in which hydroxymethyl group from 5,10-methylenetetrahydrofolate is transferred onto alpha-ketoisovalerate to form ketopantoate. This is 3-methyl-2-oxobutanoate hydroxymethyltransferase from Shewanella halifaxensis (strain HAW-EB4).